Here is a 1058-residue protein sequence, read N- to C-terminus: Carbamoyl phosphate synthase large chain (1058 aa).

The interval 1-401 (MPKRTDIQKI…SLLKACRSLE (401 aa)) is carboxyphosphate synthetic domain. ATP-binding residues include Arg129, Arg169, Gly175, Gly176, Arg208, Ile210, Glu215, Gly241, Ile242, His243, Gln284, and Glu298. The ATP-grasp 1 domain maps to 133–327 (KQLMEELEQP…IAKLAAKIAV (195 aa)). 3 residues coordinate Mg(2+): Gln284, Glu298, and Asn300. The Mn(2+) site is built by Gln284, Glu298, and Asn300. The tract at residues 402–546 (IGVHHNEIPE…YSTYGWENES (145 aa)) is oligomerization domain. The tract at residues 547-929 (IRSDKESVLV…ALYKAFEASY (383 aa)) is carbamoyl phosphate synthetic domain. In terms of domain architecture, ATP-grasp 2 spans 671–861 (EQALKELDIP…MAQVATKLIL (191 aa)). The ATP site is built by Arg707, Ser746, Ile748, Glu752, Gly777, Val778, His779, Ser780, Gln820, and Glu832. Residues Gln820, Glu832, and Asn834 each coordinate Mg(2+). Residues Gln820, Glu832, and Asn834 each contribute to the Mn(2+) site. An MGS-like domain is found at 930–1058 (LHLPTFGNVV…ESRSFVTEAI (129 aa)). An allosteric domain region spans residues 930 to 1058 (LHLPTFGNVV…ESRSFVTEAI (129 aa)).

Belongs to the CarB family. In terms of assembly, composed of two chains; the small (or glutamine) chain promotes the hydrolysis of glutamine to ammonia, which is used by the large (or ammonia) chain to synthesize carbamoyl phosphate. Tetramer of heterodimers (alpha,beta)4. The cofactor is Mg(2+). Mn(2+) serves as cofactor.

The enzyme catalyses hydrogencarbonate + L-glutamine + 2 ATP + H2O = carbamoyl phosphate + L-glutamate + 2 ADP + phosphate + 2 H(+). The catalysed reaction is hydrogencarbonate + NH4(+) + 2 ATP = carbamoyl phosphate + 2 ADP + phosphate + 2 H(+). It participates in amino-acid biosynthesis; L-arginine biosynthesis; carbamoyl phosphate from bicarbonate: step 1/1. Its pathway is pyrimidine metabolism; UMP biosynthesis via de novo pathway; (S)-dihydroorotate from bicarbonate: step 1/3. Functionally, large subunit of the glutamine-dependent carbamoyl phosphate synthetase (CPSase). CPSase catalyzes the formation of carbamoyl phosphate from the ammonia moiety of glutamine, carbonate, and phosphate donated by ATP, constituting the first step of 2 biosynthetic pathways, one leading to arginine and/or urea and the other to pyrimidine nucleotides. The large subunit (synthetase) binds the substrates ammonia (free or transferred from glutamine from the small subunit), hydrogencarbonate and ATP and carries out an ATP-coupled ligase reaction, activating hydrogencarbonate by forming carboxy phosphate which reacts with ammonia to form carbamoyl phosphate. This is Carbamoyl phosphate synthase large chain from Streptococcus pneumoniae (strain JJA).